The chain runs to 558 residues: Proline--tRNA ligase (558 aa).

Belongs to the class-II aminoacyl-tRNA synthetase family. ProS type 1 subfamily. In terms of assembly, homodimer.

It is found in the cytoplasm. It carries out the reaction tRNA(Pro) + L-proline + ATP = L-prolyl-tRNA(Pro) + AMP + diphosphate. In terms of biological role, catalyzes the attachment of proline to tRNA(Pro) in a two-step reaction: proline is first activated by ATP to form Pro-AMP and then transferred to the acceptor end of tRNA(Pro). As ProRS can inadvertently accommodate and process non-cognate amino acids such as alanine and cysteine, to avoid such errors it has two additional distinct editing activities against alanine. One activity is designated as 'pretransfer' editing and involves the tRNA(Pro)-independent hydrolysis of activated Ala-AMP. The other activity is designated 'posttransfer' editing and involves deacylation of mischarged Ala-tRNA(Pro). The misacylated Cys-tRNA(Pro) is not edited by ProRS. The polypeptide is Proline--tRNA ligase (Coprothermobacter proteolyticus (strain ATCC 35245 / DSM 5265 / OCM 4 / BT)).